The sequence spans 385 residues: Succinate--CoA ligase [ADP-forming] subunit beta (385 aa).

In terms of domain architecture, ATP-grasp spans 9 to 237 (KEILRQFGVN…LEAEHPLEIE (229 aa)). ATP is bound by residues Lys45, 52-54 (GRG), Val94, and Glu101. Residues Asn192 and Asp206 each contribute to the Mg(2+) site. Substrate is bound by residues Asn257 and 314 to 316 (GIT).

The protein belongs to the succinate/malate CoA ligase beta subunit family. In terms of assembly, heterotetramer of two alpha and two beta subunits. It depends on Mg(2+) as a cofactor.

The enzyme catalyses succinate + ATP + CoA = succinyl-CoA + ADP + phosphate. It catalyses the reaction GTP + succinate + CoA = succinyl-CoA + GDP + phosphate. Its pathway is carbohydrate metabolism; tricarboxylic acid cycle; succinate from succinyl-CoA (ligase route): step 1/1. Succinyl-CoA synthetase functions in the citric acid cycle (TCA), coupling the hydrolysis of succinyl-CoA to the synthesis of either ATP or GTP and thus represents the only step of substrate-level phosphorylation in the TCA. The beta subunit provides nucleotide specificity of the enzyme and binds the substrate succinate, while the binding sites for coenzyme A and phosphate are found in the alpha subunit. The polypeptide is Succinate--CoA ligase [ADP-forming] subunit beta (Deinococcus deserti (strain DSM 17065 / CIP 109153 / LMG 22923 / VCD115)).